The chain runs to 363 residues: MRVDLFDFDLPEERIALRPVEPRDHAKLLHVRPGEPFEDRHVYDLPDLLQPGDALVFNDTKVIPAQLEGMRERTGNISQVSATLHMRVGPDRWKAFLRPAKRVKEGDRIRFGHSGTSCFLGTLDATVAEKGDSGEALLVFDLSGAVLDEAIAAVGHIPLPPYIASKRPEDERDRKDYQTVYAREEGAVAAPTAGLHFTPDLLEKIKARGIEEHFVTLHVGAGTFLPVKADDTGDHKMHAEIGHVSQRTASALNAVHERGGRIICVGTTSLRLIESATGEDGVVRPWSGATDIFITPGYRFRAVDLLMTNFHLPRSTLFMLVSAFSGLDTMHAAYNYAIADGYRFYSYGDASLLERIDHDRHSA.

It belongs to the QueA family. In terms of assembly, monomer.

Its subcellular location is the cytoplasm. The catalysed reaction is 7-aminomethyl-7-carbaguanosine(34) in tRNA + S-adenosyl-L-methionine = epoxyqueuosine(34) in tRNA + adenine + L-methionine + 2 H(+). It functions in the pathway tRNA modification; tRNA-queuosine biosynthesis. Transfers and isomerizes the ribose moiety from AdoMet to the 7-aminomethyl group of 7-deazaguanine (preQ1-tRNA) to give epoxyqueuosine (oQ-tRNA). The polypeptide is S-adenosylmethionine:tRNA ribosyltransferase-isomerase (Brucella abortus (strain S19)).